The sequence spans 1150 residues: Pesticidal crystal protein Cry9Ea (1150 aa).

This sequence belongs to the delta endotoxin family.

Its function is as follows. Promotes colloidosmotic lysis by binding to the midgut epithelial cells of insects. This is Pesticidal crystal protein Cry9Ea (cry9Ea) from Bacillus thuringiensis subsp. aizawai.